We begin with the raw amino-acid sequence, 353 residues long: Photosystem II D2 protein (353 aa).

Threonine 2 is subject to N-acetylthreonine. Threonine 2 carries the post-translational modification Phosphothreonine. A helical membrane pass occupies residues 41-61; sequence CAYFALGGWFTGTTFVTSWYT. Histidine 118 contacts chlorophyll a. The chain crosses the membrane as a helical span at residues 125 to 141; the sequence is GFMLRQFELARSVQLRP. Residues glutamine 130 and asparagine 143 each contribute to the pheophytin a site. A helical membrane pass occupies residues 153–166; sequence VFVSVFFIYPLGQS. Residue histidine 198 coordinates chlorophyll a. A helical transmembrane segment spans residues 208–228; that stretch reads AALLCAIHGATVENTLFEDGD. A plastoquinone contacts are provided by histidine 215 and phenylalanine 262. Position 215 (histidine 215) interacts with Fe cation. Residue histidine 269 participates in Fe cation binding. A helical transmembrane segment spans residues 279 to 295; it reads GLWMSALGVVGLALNLR.

Belongs to the reaction center PufL/M/PsbA/D family. As to quaternary structure, PSII is composed of 1 copy each of membrane proteins PsbA, PsbB, PsbC, PsbD, PsbE, PsbF, PsbH, PsbI, PsbJ, PsbK, PsbL, PsbM, PsbT, PsbX, PsbY, PsbZ, Psb30/Ycf12, at least 3 peripheral proteins of the oxygen-evolving complex and a large number of cofactors. It forms dimeric complexes. The D1/D2 heterodimer binds P680, chlorophylls that are the primary electron donor of PSII, and subsequent electron acceptors. It shares a non-heme iron and each subunit binds pheophytin, quinone, additional chlorophylls, carotenoids and lipids. There is also a Cl(-1) ion associated with D1 and D2, which is required for oxygen evolution. The PSII complex binds additional chlorophylls, carotenoids and specific lipids. is required as a cofactor.

Its subcellular location is the plastid membrane. It catalyses the reaction 2 a plastoquinone + 4 hnu + 2 H2O = 2 a plastoquinol + O2. Functionally, photosystem II (PSII) is a light-driven water:plastoquinone oxidoreductase that uses light energy to abstract electrons from H(2)O, generating O(2) and a proton gradient subsequently used for ATP formation. It consists of a core antenna complex that captures photons, and an electron transfer chain that converts photonic excitation into a charge separation. The D1/D2 (PsbA/PsbD) reaction center heterodimer binds P680, the primary electron donor of PSII as well as several subsequent electron acceptors. D2 is needed for assembly of a stable PSII complex. This is Photosystem II D2 protein from Cuscuta exaltata (Tall dodder).